Reading from the N-terminus, the 214-residue chain is Large ribosomal subunit protein uL16-like (214 aa).

The protein belongs to the universal ribosomal protein uL16 family. In terms of assembly, component of a male germ cell-specific 60S large ribosomal subunit (LSU), which contains RPL10L and RPL39L, instead of RPL10 and RPL39 paralogs. The composition of the rest of the complex is similar to classical ribosomes. As to expression, testis-specific.

It localises to the cytoplasm. In terms of biological role, testis-specific component of the ribosome, which is required for the transition from prophase to metaphase in male meiosis I. Compensates for the inactivated X-linked RPL10 paralog during spermatogenesis. The ribosome is a large ribonucleoprotein complex responsible for the synthesis of proteins in the cell. The male germ cell-specific ribosome displays a ribosomal polypeptide exit tunnel of distinct size and charge states compared with the classical ribosome. It is responsible for regulating the biosynthesis and folding of a subset of male germ-cell-specific proteins that are essential for the formation of sperm. In Mus musculus (Mouse), this protein is Large ribosomal subunit protein uL16-like.